Reading from the N-terminus, the 803-residue chain is 3',5'-cyclic-AMP phosphodiesterase 4D (803 aa).

Residues 1 to 103 (MEAEGSSVPA…SGASRVRHRG (103 aa)) form a disordered region. Phosphoserine occurs at positions 52 and 56. Positions 58–85 (PPPPPPSPQPQLQPPPPPPLPPPPPPPG) are enriched in pro residues. S137, S294, S296, S343, and S370 each carry phosphoserine. The tract at residues 338 to 358 (EVEIPSPTQKEKEKKKRPMSQ) is disordered. The PDEase domain occupies 381–710 (VKTEQEDVLA…EWYQSTIPQS (330 aa)). A Glycyl lysine isopeptide (Lys-Gly) (interchain with G-Cter in SUMO) cross-link involves residue K382. H457 acts as the Proton donor in catalysis. Residue H457 coordinates 3',5'-cyclic AMP. H457 provides a ligand contact to AMP. 4 residues coordinate Zn(2+): H461, H497, D498, and D615. AMP is bound by residues D498, D615, N618, Q666, and F669. Mg(2+) is bound at residue D498. D498 provides a ligand contact to Mn(2+). Positions 666 and 669 each coordinate 3',5'-cyclic AMP. Disordered regions lie at residues 705 to 724 (STIPQSPSPAPDDQEDGRQG) and 732 to 803 (ELTL…CPDT). Residues 757–768 (CSDSKTLCTQDS) are compositionally biased toward polar residues. The segment covering 774–789 (PLDEQVEEEAVAEEES) has biased composition (acidic residues).

It belongs to the cyclic nucleotide phosphodiesterase family. PDE4 subfamily. Homodimer for the long isoforms. Isoforms with truncated N-termini are monomeric. Binds ARRB2. Isoform 33 is part of a ternary complex containing PRKAR2A, PRKAR2B and AKAP9. Identified in a complex composed of RYR1, PDE4D, PKA, FKBP1A and protein phosphatase 1 (PP1). Interacts with PDE4DIP. Isoform 5 interacts (via N-terminal region) with SHANK2 (via proline-rich region); the interaction is increased in a PKA-dependent manner. Isoform 33, isoform 4, isoform 7, isoform 8 and isoform 9 but not isoform 32 and isoform 6 interact with SHANK2. Isoform 31 interacts weakly with SHANK2. Zn(2+) is required as a cofactor. Mg(2+) serves as cofactor. It depends on Mn(2+) as a cofactor. Post-translationally, isoform 1 and isoform 9 are rapidly activated by PKA through phosphorylation. Long isoforms that share a conserved PKA phosphorylation site in the N-terminus are also activated. Sumoylation of long isoforms by PIAS4 augments their activation by PKA phosphorylation and represses their inhibition by ERK phosphorylation. As to expression, expressed in epithelial cells. Isoform 33, isoform 4, isoform 5 and isoform 9 are expressed in brain. Isoform 33, isoform 5, isoform 8 and isoform 9 are expressed in heart (at protein level). Isoform 4 and isoform 6 are strongly expressed in cortex and cerebellum. Isoform 7 is strongly expressed in cortex and testis; weakly expressed in kidney, lung, spleen and cerebellum. Isoform 8 is strongly expressed in lung, heart and liver. Isoform 31, isoform 32, isoform 33, isoform 5 and isoform 9 are widely distributed.

Its subcellular location is the apical cell membrane. The protein resides in the cytoplasm. It is found in the membrane. It localises to the cytoskeleton. The protein localises to the microtubule organizing center. Its subcellular location is the centrosome. The enzyme catalyses 3',5'-cyclic AMP + H2O = AMP + H(+). Its pathway is purine metabolism; 3',5'-cyclic AMP degradation; AMP from 3',5'-cyclic AMP: step 1/1. Its activity is regulated as follows. Activated by phosphatidic acid. Inhibited by rolipram. Functionally, hydrolyzes the second messenger cAMP, which is a key regulator of many important physiological processes. This is 3',5'-cyclic-AMP phosphodiesterase 4D (Pde4d) from Rattus norvegicus (Rat).